The following is a 126-amino-acid chain: Methylglyoxal synthase (126 aa).

Residues 1–126 (MEKKIALIAH…LIKGFEGLNT (126 aa)) enclose the MGS-like domain. Substrate is bound by residues His10, Lys14, 36–39 (TGTT), and 56–57 (SG). Asp62 serves as the catalytic Proton donor/acceptor. A substrate-binding site is contributed by His89.

It belongs to the methylglyoxal synthase family.

The catalysed reaction is dihydroxyacetone phosphate = methylglyoxal + phosphate. Catalyzes the formation of methylglyoxal from dihydroxyacetone phosphate. The sequence is that of Methylglyoxal synthase from Borrelia garinii subsp. bavariensis (strain ATCC BAA-2496 / DSM 23469 / PBi) (Borreliella bavariensis).